The primary structure comprises 269 residues: 3-methyl-2-oxobutanoate hydroxymethyltransferase (269 aa).

Mg(2+)-binding residues include aspartate 50 and aspartate 89. Residues 50–51 (DS), aspartate 89, and lysine 118 contribute to the 3-methyl-2-oxobutanoate site. Glutamate 120 provides a ligand contact to Mg(2+). Glutamate 187 serves as the catalytic Proton acceptor.

Belongs to the PanB family. As to quaternary structure, homodecamer; pentamer of dimers. Mg(2+) is required as a cofactor.

Its subcellular location is the cytoplasm. It catalyses the reaction 3-methyl-2-oxobutanoate + (6R)-5,10-methylene-5,6,7,8-tetrahydrofolate + H2O = 2-dehydropantoate + (6S)-5,6,7,8-tetrahydrofolate. Its pathway is cofactor biosynthesis; (R)-pantothenate biosynthesis; (R)-pantoate from 3-methyl-2-oxobutanoate: step 1/2. Catalyzes the reversible reaction in which hydroxymethyl group from 5,10-methylenetetrahydrofolate is transferred onto alpha-ketoisovalerate to form ketopantoate. The polypeptide is 3-methyl-2-oxobutanoate hydroxymethyltransferase (Nitrosomonas eutropha (strain DSM 101675 / C91 / Nm57)).